A 559-amino-acid polypeptide reads, in one-letter code: CCR4-NOT transcription complex subunit 6-like (559 aa).

The tract at residues 1–148 (MPKEKYDPPD…LYQEPDGTRK (148 aa)) is required for interaction with cnot1, cnot3 and cnot7. Positions 1–550 (MPKEKYDPPD…NGLHLPVHST (550 aa)) are nuclease domain. 4 LRR repeats span residues 52 to 73 (HLTALHINNNNLSRIPPEIAKL), 75 to 96 (HLVYLNLSSNKLRSLPAELGNM), 98 to 120 (TLRELLLNNNCLRVLPYELGRLF), and 121 to 143 (QLQTLGLKGNPLSQDILNLYQEP). Glu-235 serves as a coordination point for Mg(2+). Glu-235, Glu-271, His-353, and Pro-358 together coordinate substrate. A Mg(2+)-binding site is contributed by Asp-405. Residue Asp-405 is the Proton donor/acceptor of the active site. Asn-407, Asn-474, and Phe-479 together coordinate substrate.

It belongs to the CCR4/nocturin family. As to quaternary structure, component of the CCR4-NOT complex. Mg(2+) serves as cofactor.

It is found in the cytoplasm. It localises to the nucleus. The catalysed reaction is Exonucleolytic cleavage of poly(A) to 5'-AMP.. Poly(A) nuclease with 3'-5' RNase activity. Catalytic component of the CCR4-NOT complex which is one of the major cellular mRNA deadenylases and is linked to various cellular processes including bulk mRNA degradation, miRNA-mediated repression, translational repression during translational initiation and general transcription regulation. Additional complex functions may be a consequence of its influence on mRNA expression. The protein is CCR4-NOT transcription complex subunit 6-like (cnot6l) of Danio rerio (Zebrafish).